The following is a 121-amino-acid chain: Immunoglobulin heavy variable 6-1 (121 aa).

An N-terminal signal peptide occupies residues 1–20 (MSVSFLIFLPVLGLPWGVLS). Positions 21–45 (QVQLQQSGPGLVKPSQTLSLTCAIS) are framework-1. The region spanning 21 to 121 (QVQLQQSGPG…EDTAVYYCAR (101 aa)) is the Ig-like domain. Cys-42 and Cys-119 are oxidised to a cystine. Positions 46–55 (GDSVSSNSAA) are complementarity-determining-1. The segment at 56-72 (WNWIRQSPSRGLEWLGR) is framework-2. Residues 73 to 81 (TYYRSKWYN) are complementarity-determining-2. The framework-3 stretch occupies residues 82–119 (DYAVSVKSRITINPDTSKNQFSLQLNSVTPEDTAVYYC). The tract at residues 120–121 (AR) is complementarity-determining-3.

Immunoglobulins are composed of two identical heavy chains and two identical light chains; disulfide-linked.

It is found in the secreted. Its subcellular location is the cell membrane. Its function is as follows. V region of the variable domain of immunoglobulin heavy chains that participates in the antigen recognition. Immunoglobulins, also known as antibodies, are membrane-bound or secreted glycoproteins produced by B lymphocytes. In the recognition phase of humoral immunity, the membrane-bound immunoglobulins serve as receptors which, upon binding of a specific antigen, trigger the clonal expansion and differentiation of B lymphocytes into immunoglobulins-secreting plasma cells. Secreted immunoglobulins mediate the effector phase of humoral immunity, which results in the elimination of bound antigens. The antigen binding site is formed by the variable domain of one heavy chain, together with that of its associated light chain. Thus, each immunoglobulin has two antigen binding sites with remarkable affinity for a particular antigen. The variable domains are assembled by a process called V-(D)-J rearrangement and can then be subjected to somatic hypermutations which, after exposure to antigen and selection, allow affinity maturation for a particular antigen. This Homo sapiens (Human) protein is Immunoglobulin heavy variable 6-1.